A 368-amino-acid chain; its full sequence is Glutamate 5-kinase (368 aa).

Lys9 serves as a coordination point for ATP. Substrate contacts are provided by Ser49, Asp136, and Asn148. ATP contacts are provided by residues 168–169 and 210–216; these read TD and TGGMMTK. One can recognise a PUA domain in the interval 275 to 353; that stretch reads AGIITIDDGA…ADIENVLGYE (79 aa).

This sequence belongs to the glutamate 5-kinase family.

Its subcellular location is the cytoplasm. It carries out the reaction L-glutamate + ATP = L-glutamyl 5-phosphate + ADP. It functions in the pathway amino-acid biosynthesis; L-proline biosynthesis; L-glutamate 5-semialdehyde from L-glutamate: step 1/2. Catalyzes the transfer of a phosphate group to glutamate to form L-glutamate 5-phosphate. The chain is Glutamate 5-kinase from Haemophilus influenzae (strain 86-028NP).